A 703-amino-acid polypeptide reads, in one-letter code: ABC transporter G family member 11 (703 aa).

The 244-residue stretch at 50 to 293 (LTWQDLTVMV…FAQAGFPCPA (244 aa)) folds into the ABC transporter domain. An ATP-binding site is contributed by 87–94 (GPSGSGKS). The ABC transmembrane type-2 domain maps to 382–594 (LQTYTLTKRS…ALQGQYQNDL (213 aa)). An N-linked (GlcNAc...) asparagine glycan is attached at Asn-394. Helical transmembrane passes span 406-426 (LLIY…VGTS), 436-456 (CASF…PSFV), 485-505 (TPFL…MVGL), 513-533 (LFFV…MMAI), 540-560 (FLMG…VSGF), and 628-648 (INLS…FIMI). Asn-671 and Asn-675 each carry an N-linked (GlcNAc...) asparagine glycan. Ser-688 bears the Phosphoserine mark.

This sequence belongs to the ABC transporter superfamily. ABCG family. Eye pigment precursor importer (TC 3.A.1.204) subfamily. As to quaternary structure, homodimer. Forms heterodimers with ABCG9, ABCG12 and ABCG14 in epidermal cells. As to expression, expressed in seedlings, roots, stems, leaves, flowers, and siliques, mostly in epidermis, trichomes, vasculatures and developing tissues. Follows an uniparental maternal expression in the seed, thus being the product of a maternally expressed imprinted gene. Accumulates in the phloem. Transcripts seem to be transported from shoots to roots.

The protein localises to the cell membrane. Functionally, required for the cuticle, root suberin and pollen coat development by controlling cutin and maybe wax transport to the extracellular matrix. Involved in developmental plasticity and stress responses. Together with ABCG9 and ABCG14, required for vascular development by regulating lipid/sterol homeostasis. May be a transporter of lignin precursors during tracheary element differentiation. The protein is ABC transporter G family member 11 of Arabidopsis thaliana (Mouse-ear cress).